Here is a 441-residue protein sequence, read N- to C-terminus: uncharacterized protein (441 aa).

A compositionally biased stretch (low complexity) spans 121–143 (TLSPSIVSEQQQQQQQQQQQQQQ). Disordered regions lie at residues 121–146 (TLSPSIVSEQQQQQQQQQQQQQQAIS) and 371–392 (SDADTDSDSEHPTSAPSTTAPN). A compositionally biased stretch (polar residues) spans 382-391 (PTSAPSTTAP).

This is an uncharacterized protein from Dictyostelium discoideum (Social amoeba).